The primary structure comprises 199 residues: 3-isopropylmalate dehydratase small subunit (199 aa).

This sequence belongs to the LeuD family. LeuD type 1 subfamily. Heterodimer of LeuC and LeuD.

It carries out the reaction (2R,3S)-3-isopropylmalate = (2S)-2-isopropylmalate. It functions in the pathway amino-acid biosynthesis; L-leucine biosynthesis; L-leucine from 3-methyl-2-oxobutanoate: step 2/4. Catalyzes the isomerization between 2-isopropylmalate and 3-isopropylmalate, via the formation of 2-isopropylmaleate. In Aeromonas salmonicida (strain A449), this protein is 3-isopropylmalate dehydratase small subunit.